The sequence spans 253 residues: Succinate dehydrogenase [ubiquinone] iron-sulfur subunit, mitochondrial (253 aa).

One can recognise a 2Fe-2S ferredoxin-type domain in the interval 23-114 (FKIYRWNPDK…TTKIYPLPHM (92 aa)). 4 residues coordinate [2Fe-2S] cluster: Cys74, Cys79, Cys82, and Cys94. Residues 156-186 (DRKKLDGLYECILCACCSTSCPSYWWNQEEY) form the 4Fe-4S ferredoxin-type domain. 3 residues coordinate [4Fe-4S] cluster: Cys166, Cys169, and Cys172. [3Fe-4S] cluster is bound at residue Cys176. Trp181 is an a ubiquinone binding site. [3Fe-4S] cluster is bound by residues Cys223 and Cys229. Position 233 (Cys233) interacts with [4Fe-4S] cluster.

It belongs to the succinate dehydrogenase/fumarate reductase iron-sulfur protein family. Component of complex II composed of four subunits: a flavoprotein (FP), an iron-sulfur protein (IP), and a cytochrome b composed of a large and a small subunit. It depends on [2Fe-2S] cluster as a cofactor. [3Fe-4S] cluster serves as cofactor. The cofactor is [4Fe-4S] cluster.

Its subcellular location is the mitochondrion inner membrane. It carries out the reaction a quinone + succinate = fumarate + a quinol. It participates in carbohydrate metabolism; tricarboxylic acid cycle; fumarate from succinate (eukaryal route): step 1/1. Its function is as follows. Iron-sulfur protein (IP) subunit of succinate dehydrogenase (SDH) that is involved in complex II of the mitochondrial electron transport chain and is responsible for transferring electrons from succinate to ubiquinone (coenzyme Q). The protein is Succinate dehydrogenase [ubiquinone] iron-sulfur subunit, mitochondrial (SDH2) of Candida glabrata (strain ATCC 2001 / BCRC 20586 / JCM 3761 / NBRC 0622 / NRRL Y-65 / CBS 138) (Yeast).